A 70-amino-acid polypeptide reads, in one-letter code: uncharacterized protein (70 aa).

Its subcellular location is the plastid. The protein localises to the chloroplast. This is an uncharacterized protein from Mesostigma viride (Green alga).